A 175-amino-acid polypeptide reads, in one-letter code: Peptide deformylase (175 aa).

2 residues coordinate Fe cation: Cys-99 and His-141. Residue Glu-142 is part of the active site. Fe cation is bound at residue His-145.

Belongs to the polypeptide deformylase family. It depends on Fe(2+) as a cofactor.

The catalysed reaction is N-terminal N-formyl-L-methionyl-[peptide] + H2O = N-terminal L-methionyl-[peptide] + formate. Functionally, removes the formyl group from the N-terminal Met of newly synthesized proteins. Requires at least a dipeptide for an efficient rate of reaction. N-terminal L-methionine is a prerequisite for activity but the enzyme has broad specificity at other positions. This Rickettsia typhi (strain ATCC VR-144 / Wilmington) protein is Peptide deformylase.